The sequence spans 54 residues: ATP synthase F(0) complex subunit 8 (54 aa).

A helical transmembrane segment spans residues 8 to 24; it reads PWFSIMLLTWFTFSLLI.

The protein belongs to the ATPase protein 8 family. Component of the ATP synthase complex composed at least of ATP5F1A/subunit alpha, ATP5F1B/subunit beta, ATP5MC1/subunit c (homooctomer), MT-ATP6/subunit a, MT-ATP8/subunit 8, ATP5ME/subunit e, ATP5MF/subunit f, ATP5MG/subunit g, ATP5MK/subunit k, ATP5MJ/subunit j, ATP5F1C/subunit gamma, ATP5F1D/subunit delta, ATP5F1E/subunit epsilon, ATP5PF/subunit F6, ATP5PB/subunit b, ATP5PD/subunit d, ATP5PO/subunit OSCP. ATP synthase complex consists of a soluble F(1) head domain (subunits alpha(3) and beta(3)) - the catalytic core - and a membrane F(0) domain - the membrane proton channel (subunits c, a, 8, e, f, g, k and j). These two domains are linked by a central stalk (subunits gamma, delta, and epsilon) rotating inside the F1 region and a stationary peripheral stalk (subunits F6, b, d, and OSCP).

Its subcellular location is the mitochondrion membrane. Its function is as follows. Subunit 8, of the mitochondrial membrane ATP synthase complex (F(1)F(0) ATP synthase or Complex V) that produces ATP from ADP in the presence of a proton gradient across the membrane which is generated by electron transport complexes of the respiratory chain. ATP synthase complex consist of a soluble F(1) head domain - the catalytic core - and a membrane F(1) domain - the membrane proton channel. These two domains are linked by a central stalk rotating inside the F(1) region and a stationary peripheral stalk. During catalysis, ATP synthesis in the catalytic domain of F(1) is coupled via a rotary mechanism of the central stalk subunits to proton translocation. In vivo, can only synthesize ATP although its ATP hydrolase activity can be activated artificially in vitro. Part of the complex F(0) domain. This Gallus gallus (Chicken) protein is ATP synthase F(0) complex subunit 8.